Here is a 78-residue protein sequence, read N- to C-terminus: Protein SlyX homolog (78 aa).

Belongs to the SlyX family.

The polypeptide is Protein SlyX homolog (Xanthomonas euvesicatoria pv. vesicatoria (strain 85-10) (Xanthomonas campestris pv. vesicatoria)).